A 41-amino-acid chain; its full sequence is Ornatin-A2 (41 aa).

The Cell attachment site motif lies at 33–35 (RGD).

This sequence belongs to the ornatin family.

It is found in the secreted. Potent inhibitor of fibrinogen interaction with platelet receptors expressed on glycoprotein IIb-IIIa complex. May prevent blood from clotting during either feeding and/or storage of ingested blood. The protein is Ornatin-A2 of Placobdella ornata (Turtle leech).